A 226-amino-acid chain; its full sequence is RLA class II histocompatibility antigen, DP alpha-1 chain (226 aa).

At 1–189 (EHVSVFVIFA…PIQMPETTET (189 aa)) the chain is on the extracellular side. Asparagine 75 and asparagine 115 each carry an N-linked (GlcNAc...) asparagine glycan. The Ig-like C1-type domain maps to 84-176 (PEVIVFPKEP…LDAPLLTHWE (93 aa)). Residues cysteine 104 and cysteine 160 are joined by a disulfide bond. Residues 190-210 (VVCALGLVVGLAGVVVGIVLI) traverse the membrane as a helical segment. The Cytoplasmic segment spans residues 211-226 (TKALRSSPDPRARRPL).

The protein belongs to the MHC class II family.

Its subcellular location is the membrane. In Oryctolagus cuniculus (Rabbit), this protein is RLA class II histocompatibility antigen, DP alpha-1 chain.